A 371-amino-acid chain; its full sequence is Queuine tRNA-ribosyltransferase (371 aa).

Residue Asp90 is the Proton acceptor of the active site. Substrate contacts are provided by residues 90–94 (DSGGF), Asp144, Gln188, and Gly215. The RNA binding stretch occupies residues 246–252 (GVGTPED). Asp265 serves as the catalytic Nucleophile. Residues 270–274 (TRNAR) form an RNA binding; important for wobble base 34 recognition region. Zn(2+) is bound by residues Cys303, Cys305, Cys308, and His334.

It belongs to the queuine tRNA-ribosyltransferase family. Homodimer. Within each dimer, one monomer is responsible for RNA recognition and catalysis, while the other monomer binds to the replacement base PreQ1. It depends on Zn(2+) as a cofactor.

It carries out the reaction 7-aminomethyl-7-carbaguanine + guanosine(34) in tRNA = 7-aminomethyl-7-carbaguanosine(34) in tRNA + guanine. It participates in tRNA modification; tRNA-queuosine biosynthesis. Functionally, catalyzes the base-exchange of a guanine (G) residue with the queuine precursor 7-aminomethyl-7-deazaguanine (PreQ1) at position 34 (anticodon wobble position) in tRNAs with GU(N) anticodons (tRNA-Asp, -Asn, -His and -Tyr). Catalysis occurs through a double-displacement mechanism. The nucleophile active site attacks the C1' of nucleotide 34 to detach the guanine base from the RNA, forming a covalent enzyme-RNA intermediate. The proton acceptor active site deprotonates the incoming PreQ1, allowing a nucleophilic attack on the C1' of the ribose to form the product. After dissociation, two additional enzymatic reactions on the tRNA convert PreQ1 to queuine (Q), resulting in the hypermodified nucleoside queuosine (7-(((4,5-cis-dihydroxy-2-cyclopenten-1-yl)amino)methyl)-7-deazaguanosine). This chain is Queuine tRNA-ribosyltransferase, found in Neisseria meningitidis serogroup B (strain ATCC BAA-335 / MC58).